We begin with the raw amino-acid sequence, 107 residues long: U1-lycotoxin-Ls1t (107 aa).

The signal sequence occupies residues 1–20 (MMKVLVVVALLVTLISYSSS). A propeptide spanning residues 21–41 (EGIDDLEADELLSLMANEQTR) is cleaved from the precursor. 4 disulfides stabilise this stretch: C44-C59, C51-C68, C58-C86, and C70-C84.

It belongs to the neurotoxin 19 (CSTX) family. 04 (U1-Lctx) subfamily. As to expression, expressed by the venom gland.

The protein resides in the secreted. The polypeptide is U1-lycotoxin-Ls1t (Lycosa singoriensis (Wolf spider)).